A 277-amino-acid polypeptide reads, in one-letter code: Bifunctional protein FolD (277 aa).

NADP(+)-binding positions include 160 to 162 (GAS), serine 185, and isoleucine 226.

The protein belongs to the tetrahydrofolate dehydrogenase/cyclohydrolase family. As to quaternary structure, homodimer.

It carries out the reaction (6R)-5,10-methylene-5,6,7,8-tetrahydrofolate + NADP(+) = (6R)-5,10-methenyltetrahydrofolate + NADPH. It catalyses the reaction (6R)-5,10-methenyltetrahydrofolate + H2O = (6R)-10-formyltetrahydrofolate + H(+). The protein operates within one-carbon metabolism; tetrahydrofolate interconversion. In terms of biological role, catalyzes the oxidation of 5,10-methylenetetrahydrofolate to 5,10-methenyltetrahydrofolate and then the hydrolysis of 5,10-methenyltetrahydrofolate to 10-formyltetrahydrofolate. The protein is Bifunctional protein FolD of Vesicomyosocius okutanii subsp. Calyptogena okutanii (strain HA).